The following is a 207-amino-acid chain: 5-amino-6-(5-phosphoribosylamino)uracil reductase (207 aa).

Residue S6 coordinates substrate. W8 provides a ligand contact to NADP(+). R22 contributes to the substrate binding site. Residue D38 coordinates NADP(+). Residues L42 and R45 each coordinate substrate. Residue S72 coordinates NADP(+). Residue E137 coordinates substrate.

It belongs to the HTP reductase family.

The catalysed reaction is 5-amino-6-(5-phospho-D-ribitylamino)uracil + NADP(+) = 5-amino-6-(5-phospho-D-ribosylamino)uracil + NADPH + H(+). The protein operates within cofactor biosynthesis; riboflavin biosynthesis; 5-amino-6-(D-ribitylamino)uracil from GTP: step 3/4. The chain is 5-amino-6-(5-phosphoribosylamino)uracil reductase (ribD2) from Buchnera aphidicola subsp. Acyrthosiphon pisum (strain APS) (Acyrthosiphon pisum symbiotic bacterium).